A 483-amino-acid chain; its full sequence is Cysteine proteinase 1, mitochondrial (483 aa).

A mitochondrion-targeting transit peptide spans 1 to 30 (MLPTSVSRSLYLKTFRSHLLRAPQIVLKRM). Catalysis depends on residues cysteine 102, histidine 398, and asparagine 421. Lysine 483 is a propeptide (removed in mature form; by autocatalysis).

The protein belongs to the peptidase C1 family. In terms of assembly, homohexamer. Binds to nucleic acids. Binds single-stranded DNA and RNA with higher affinity than double-stranded DNA. Post-translationally, the N-terminus of isoform Cytoplasmic is blocked.

The protein localises to the mitochondrion. Its subcellular location is the cytoplasm. It carries out the reaction Inactivates bleomycin B2 (a cytotoxic glycometallopeptide) by hydrolysis of a carboxyamide bond of beta-aminoalanine, but also shows general aminopeptidase activity. The specificity varies somewhat with source, but amino acid arylamides of Met, Leu and Ala are preferred.. With respect to regulation, inhibited by E64, a specific inhibitor of cysteine proteases, N-ethylmaleimide, iodacetamide, and mercury and zinc ions. The normal physiological role of the enzyme is unknown, but it is not essential for the viability of yeast cells. Has aminopeptidase activity, shortening substrate peptides sequentially by 1 amino acid. Has bleomycin hydrolase activity, which can protect the cell from the toxic effects of bleomycin. Has homocysteine-thiolactonase activity, protecting the cell against homocysteine toxicity. Acts as a repressor in the GAL4 regulatory system, but this does not require either the peptidase or nucleic acid-binding activities. This is Cysteine proteinase 1, mitochondrial (LAP3) from Saccharomyces cerevisiae (strain JAY291) (Baker's yeast).